A 104-amino-acid chain; its full sequence is Large ribosomal subunit protein uL24 (104 aa).

The protein belongs to the universal ribosomal protein uL24 family. In terms of assembly, part of the 50S ribosomal subunit.

One of two assembly initiator proteins, it binds directly to the 5'-end of the 23S rRNA, where it nucleates assembly of the 50S subunit. Functionally, one of the proteins that surrounds the polypeptide exit tunnel on the outside of the subunit. This Treponema denticola (strain ATCC 35405 / DSM 14222 / CIP 103919 / JCM 8153 / KCTC 15104) protein is Large ribosomal subunit protein uL24.